The primary structure comprises 975 residues: Glycine dehydrogenase (decarboxylating) (975 aa).

K723 carries the post-translational modification N6-(pyridoxal phosphate)lysine.

This sequence belongs to the GcvP family. In terms of assembly, the glycine cleavage system is composed of four proteins: P, T, L and H. Requires pyridoxal 5'-phosphate as cofactor.

The enzyme catalyses N(6)-[(R)-lipoyl]-L-lysyl-[glycine-cleavage complex H protein] + glycine + H(+) = N(6)-[(R)-S(8)-aminomethyldihydrolipoyl]-L-lysyl-[glycine-cleavage complex H protein] + CO2. Its function is as follows. The glycine cleavage system catalyzes the degradation of glycine. The P protein binds the alpha-amino group of glycine through its pyridoxal phosphate cofactor; CO(2) is released and the remaining methylamine moiety is then transferred to the lipoamide cofactor of the H protein. The protein is Glycine dehydrogenase (decarboxylating) of Burkholderia ambifaria (strain ATCC BAA-244 / DSM 16087 / CCUG 44356 / LMG 19182 / AMMD) (Burkholderia cepacia (strain AMMD)).